A 627-amino-acid chain; its full sequence is RNA interference defective protein 10 (627 aa).

Disordered stretches follow at residues 1–31 (MSNH…VRQN), 467–487 (QRDT…HDQY), and 523–589 (SSVR…SEDY). Basic and acidic residues-rich tracts occupy residues 7–16 (NFRDYQREGI), 467–478 (QRDTDEQYDVHQ), and 526–537 (REPEHPSARSRD).

This sequence belongs to the maelstrom family. Interacts with rde-11 (via RING-type zinc finger domain). Interacts with ergo-1.

In terms of biological role, in complex with rde-11, required in the endogenous and exogenous siRNA pathway for biogenesis and accumulation of secondary small interfering RNA (siRNA) intermediates, such as 22G-siRNAs derived from ergo-1 targets. The chain is RNA interference defective protein 10 from Caenorhabditis elegans.